The chain runs to 288 residues: Co-chaperone protein DjlA (288 aa).

Over 1 to 6 (MNFIGK) the chain is Periplasmic. The helical transmembrane segment at 7-30 (ILGFIIGYRFGGLFGGIAGLILGH) threads the bilayer. At 31-288 (IADKKLYELG…DLICKVKGWK (258 aa)) the chain is on the cytoplasmic side. The J domain occupies 222–288 (DAYKVLGVNA…DLICKVKGWK (67 aa)).

As to quaternary structure, homodimer.

It localises to the cell inner membrane. Its function is as follows. Regulatory DnaK co-chaperone. Direct interaction between DnaK and DjlA is needed for the induction of the wcaABCDE operon, involved in the synthesis of a colanic acid polysaccharide capsule, possibly through activation of the RcsB/RcsC phosphotransfer signaling pathway. The colanic acid capsule may help the bacterium survive conditions outside the host. The sequence is that of Co-chaperone protein DjlA from Mannheimia succiniciproducens (strain KCTC 0769BP / MBEL55E).